We begin with the raw amino-acid sequence, 745 residues long: Probable xyloglucan glycosyltransferase 3 (745 aa).

2 consecutive transmembrane segments (helical) span residues 116-136 and 196-216; these read GFLL…LKGW and IDYI…LFMV. Aspartate 300 is a catalytic residue. Substrate is bound by residues aspartate 359 and aspartate 361. The active site involves aspartate 453. Helical transmembrane passes span 531-551, 556-576, 695-715, and 720-740; these read LILP…TMFV, LPIW…ILPA, IFKK…RSLL, and LHFY…LDLI.

The protein belongs to the glycosyltransferase 2 family. Plant cellulose synthase-like C subfamily.

The protein localises to the golgi apparatus membrane. Probable beta-1,4-glucan synthase rather involved in the synthesis of the xyloglucan backbone than cellulose. Seems to work simultaneously with xyloglucan 6-xylosyltransferase. Xyloglucan is a noncellulosic polysaccharides of plant cell wall and consists of a glucan backbone substituted by xylose, galactose and fucose. The protein is Probable xyloglucan glycosyltransferase 3 (CSLC3) of Oryza sativa subsp. japonica (Rice).